Consider the following 2481-residue polypeptide: Tetratricopeptide repeat protein 28 (2481 aa).

The residue at position 1 (M1) is an N-acetylmethionine. Over residues 1-14 (MEQSPPPAPEPTQG) the composition is skewed to pro residues. The interval 1 to 48 (MEQSPPPAPEPTQGPTPARSRRRREPESPPASAPIPLFGADTIGQRSP) is disordered. S28 is subject to Phosphoserine. TPR repeat units lie at residues 58–91 (FVEK…DPQN), 93–125 (ILYS…NPKW), 126–159 (PKAY…DPKS), 196–229 (FVVV…GTCS), 234–267 (GSVF…AKTL), 274–307 (CRAH…AMKL), 314–347 (SSAL…AKQS), 354–387 (AREL…AKDL), 394–427 (ARAY…AQEL), 434–467 (MRAY…AEDL), 474–507 (GRAS…AQEL), 514–547 (GRAY…SMEV), 554–587 (ASTH…AREL), 594–627 (ARAL…APDL), 634–667 (GKVC…AKDL), 674–707 (AKAY…AQSL), 714–747 (FRAL…AHQV), 754–787 (ASAY…YQEL), 794–827 (CRAH…GQKL), 834–867 (AQVY…LQQL), 877–910 (GRAY…AQSL), 917–950 (AKAY…AHEL), 957–990 (AQAY…ARDM), 997–1030 (SDAA…AEET), 1037–1070 (GRAY…AAQM), 1077–1110 (TVSY…AEQL), 1117–1150 (AKIR…FETI), and 1169–1202 (TSSY…AFAD). The residue at position 1590 (S1590) is a Phosphoserine. 3 disordered regions span residues 2004–2055 (FVSK…DEEE), 2075–2161 (NTCF…DPQE), and 2176–2339 (AVER…PADA). Polar residues-rich tracts occupy residues 2029-2043 (AYLQ…QLPP) and 2096-2122 (SVSS…NSPF). Position 2104 is a phosphoserine (S2104). Residues 2130–2146 (SSDTGESDQSSTETDST) show a composition bias toward low complexity. Over residues 2149–2159 (SQEESNPKLDP) the composition is skewed to basic and acidic residues. The span at 2183–2214 (SGGQVSKSNNPEDGVQAPSSTAVFRASETSAF) shows a compositional bias: polar residues. Phosphoserine is present on residues S2224 and S2251. Over residues 2238–2282 (RSSSLPKVSSGYSSPTTSEMSIKDSPSQHSGRPSPGCDSQTSQLD) the composition is skewed to polar residues. Residues 2307–2339 (SPSSGHQSPAGSAPSPALSYSSAGSARSSPADA) are compositionally biased toward low complexity. Residues S2393 and S2398 each carry the phosphoserine modification. Residues 2420-2467 (QHDGAPPKAPPNGHWRTETTSLGSLPLPAGPPATAPARPLRLPSGNGY) are disordered.

As to quaternary structure, interacts with AURKB. As to expression, widely expressed in fetal tissues. In adult tissues, expressed in testis and ovary and, at much lower levels, in kidney and pancreas.

Its subcellular location is the cytoplasm. It is found in the cytoskeleton. The protein resides in the microtubule organizing center. The protein localises to the centrosome. It localises to the spindle. Its subcellular location is the spindle pole. It is found in the midbody. Its function is as follows. During mitosis, may be involved in the condensation of spindle midzone microtubules, leading to the formation of midbody. The polypeptide is Tetratricopeptide repeat protein 28 (TTC28) (Homo sapiens (Human)).